Here is a 561-residue protein sequence, read N- to C-terminus: SUN domain-containing protein 5 (561 aa).

Residues 36–56 (GSFFERSISLVLLLWCFLFLV) traverse the membrane as a helical segment. In terms of domain architecture, SUN spans 158–318 (NGSSQLVNNG…SVVEVFGIDA (161 aa)). The interval 345-367 (ADEKQDGEIKSNRTDQIGKETEA) is disordered. A coiled-coil region spans residues 454–499 (MEKELRDLELWKTLVASRVESLARGNSALRLDVEKIVKEQANLESK). 2 consecutive transmembrane segments (helical) span residues 501–521 (LGVLLISLFFVVLATIRLVST) and 540–560 (PDSGWVMILLSSSIMIFIHLL).

Forms homomers. Interacts with SUN3 and TIK.

The protein localises to the membrane. Functionally, encodes a member of the mid-SUN subfamily of SUN-domain proteins. It is involved in early seed development and nuclear morphology. [TAIR]. The chain is SUN domain-containing protein 5 from Arabidopsis thaliana (Mouse-ear cress).